Consider the following 165-residue polypeptide: Large ribosomal subunit protein uL10 (165 aa).

It belongs to the universal ribosomal protein uL10 family. Part of the ribosomal stalk of the 50S ribosomal subunit. The N-terminus interacts with L11 and the large rRNA to form the base of the stalk. The C-terminus forms an elongated spine to which L12 dimers bind in a sequential fashion forming a multimeric L10(L12)X complex.

Its function is as follows. Forms part of the ribosomal stalk, playing a central role in the interaction of the ribosome with GTP-bound translation factors. This Yersinia pseudotuberculosis serotype IB (strain PB1/+) protein is Large ribosomal subunit protein uL10.